Reading from the N-terminus, the 289-residue chain is Diaminopimelate epimerase (289 aa).

Residues asparagine 13, glutamine 47, and asparagine 67 each contribute to the substrate site. The active-site Proton donor is cysteine 76. Residues 77–78 (GN), asparagine 167, asparagine 200, and 218–219 (ER) each bind substrate. Cysteine 227 functions as the Proton acceptor in the catalytic mechanism. 228–229 (GT) contacts substrate.

This sequence belongs to the diaminopimelate epimerase family. Homodimer.

Its subcellular location is the cytoplasm. It catalyses the reaction (2S,6S)-2,6-diaminopimelate = meso-2,6-diaminopimelate. Its pathway is amino-acid biosynthesis; L-lysine biosynthesis via DAP pathway; DL-2,6-diaminopimelate from LL-2,6-diaminopimelate: step 1/1. Its function is as follows. Catalyzes the stereoinversion of LL-2,6-diaminopimelate (L,L-DAP) to meso-diaminopimelate (meso-DAP), a precursor of L-lysine and an essential component of the bacterial peptidoglycan. The sequence is that of Diaminopimelate epimerase from Burkholderia pseudomallei (strain 668).